The primary structure comprises 773 residues: Subtilisin-like protease SBT3.4 (773 aa).

A signal peptide spans 1-23; it reads MRNFRSSVLVVLSLIIVLNVARA. The propeptide at 24–108 is activation peptide; the sequence is SAKSKVHIVY…VIPDSYYELA (85 aa). Positions 29-108 constitute an Inhibitor I9 domain; it reads VHIVYLGEKQ…VIPDSYYELA (80 aa). Positions 112–620 constitute a Peptidase S8 domain; it reads IWDYLGPSAD…GGLVNPEKAA (509 aa). Residue Asp-142 is the Charge relay system of the active site. An N-linked (GlcNAc...) asparagine glycan is attached at Asn-200. His-216 functions as the Charge relay system in the catalytic mechanism. N-linked (GlcNAc...) asparagine glycosylation is found at Asn-231, Asn-408, and Asn-536. Positions 382 to 474 constitute a PA domain; sequence SLVYPEDPGN…IDNELGTDIL (93 aa). Catalysis depends on Ser-551, which acts as the Charge relay system. An N-linked (GlcNAc...) asparagine glycan is attached at Asn-643.

This sequence belongs to the peptidase S8 family.

It is found in the secreted. In Arabidopsis thaliana (Mouse-ear cress), this protein is Subtilisin-like protease SBT3.4.